We begin with the raw amino-acid sequence, 29 residues long: NAD-reducing hydrogenase HoxS subunit delta (29 aa).

The span at Met-1 to Ser-11 shows a compositional bias: basic and acidic residues. The tract at residues Met-1–Ser-29 is disordered.

This sequence belongs to the [NiFe]/[NiFeSe] hydrogenase small subunit family. As to quaternary structure, tetramer of an alpha and a gamma subunits (flavin-containing dimer), and a delta and a nickel-containing beta subunits (hydrogenase dimer). It depends on [4Fe-4S] cluster as a cofactor. The cofactor is [3Fe-4S] cluster. [2Fe-2S] cluster is required as a cofactor. Requires FMN as cofactor. Ni(2+) serves as cofactor.

It is found in the cytoplasm. It carries out the reaction H2 + NAD(+) = NADH + H(+). The protein is NAD-reducing hydrogenase HoxS subunit delta (hoxY) of Rhodococcus opacus (Nocardia opaca).